The chain runs to 126 residues: Small ribosomal subunit protein uS13 (126 aa).

Residues 91–126 (HRAGLPVRGQRTRTNSRTRRSAKRTVAGKKKAPSKK) are disordered. Residues 100–126 (QRTRTNSRTRRSAKRTVAGKKKAPSKK) show a composition bias toward basic residues.

It belongs to the universal ribosomal protein uS13 family. In terms of assembly, part of the 30S ribosomal subunit. Forms a loose heterodimer with protein S19. Forms two bridges to the 50S subunit in the 70S ribosome.

Its function is as follows. Located at the top of the head of the 30S subunit, it contacts several helices of the 16S rRNA. In the 70S ribosome it contacts the 23S rRNA (bridge B1a) and protein L5 of the 50S subunit (bridge B1b), connecting the 2 subunits; these bridges are implicated in subunit movement. Contacts the tRNAs in the A and P-sites. The sequence is that of Small ribosomal subunit protein uS13 from Acaryochloris marina (strain MBIC 11017).